We begin with the raw amino-acid sequence, 163 residues long: Pheromone-binding protein (163 aa).

A signal peptide spans 1–21 (MLRKISLLLLPVFVAINLVHS). Disulfide bonds link C40–C75, C71–C129, and C118–C138.

The protein belongs to the PBP/GOBP family. In terms of assembly, homodimer. In terms of tissue distribution, antenna.

Its function is as follows. This major soluble protein in olfactory sensilla of male moths might serve to solubilize the extremely hydrophobic pheromone molecules and to transport pheromone through the aqueous lymph to receptors located on olfactory cilia. The polypeptide is Pheromone-binding protein (Antheraea polyphemus (Polyphemus moth)).